A 1403-amino-acid chain; its full sequence is Perilipin-4 (1403 aa).

The interval 1 to 21 is disordered; it reads MSASGDGTRVPPKSKGKTLSS. A phosphoserine mark is found at Ser-25 and Ser-31. Residues 33–70 form a disordered region; it reads RNLVSHTHSSTSTKDLQTATDPSGTPAPSSKVSTNSQM. Tandem repeats lie at residues 104 to 136, 137 to 169, 170 to 202, 203 to 235, 236 to 268, 269 to 301, 302 to 334, 335 to 367, 368 to 400, 401 to 433, 434 to 466, 467 to 499, 500 to 532, 533 to 565, 566 to 598, 599 to 631, 632 to 664, 665 to 697, 698 to 730, 731 to 763, 764 to 796, 797 to 829, 830 to 862, 863 to 895, 896 to 928, 929 to 961, 962 to 994, 995 to 1027, and 1028 to 1060. Positions 104 to 1060 are 29 X 33 AA approximate tandem repeat; the sequence is GVFGIMDAAK…VTSAMNMAKG (957 aa). A Phosphoserine modification is found at Ser-1281. At Thr-1287 the chain carries Phosphothreonine.

This sequence belongs to the perilipin family. As to expression, specifically expressed in white adipose tissue and also weakly detected in heart and skeletal muscle (at protein level).

It is found in the cell membrane. It localises to the cytoplasm. The protein localises to the lipid droplet. May play a role in triacylglycerol packaging into adipocytes. May function as a coat protein involved in the biogenesis of lipid droplets. This chain is Perilipin-4 (Plin4), found in Mus musculus (Mouse).